Reading from the N-terminus, the 559-residue chain is Glutamine--tRNA ligase (559 aa).

The short motif at 44-54 (PEPNGYLHIGH) is the 'HIGH' region element. ATP-binding positions include 45–47 (EPN) and 51–57 (HIGHAKS). L-glutamine is bound by residues Asp77 and Tyr222. Residues Thr241 and 272–273 (RL) contribute to the ATP site. Residues 279–283 (LTSKR) carry the 'KMSKS' region motif.

It belongs to the class-I aminoacyl-tRNA synthetase family. In terms of assembly, monomer.

It is found in the cytoplasm. The catalysed reaction is tRNA(Gln) + L-glutamine + ATP = L-glutaminyl-tRNA(Gln) + AMP + diphosphate. The protein is Glutamine--tRNA ligase of Actinobacillus succinogenes (strain ATCC 55618 / DSM 22257 / CCUG 43843 / 130Z).